The chain runs to 442 residues: Cell division protein FtsZ (442 aa).

GTP-binding positions include glycine 18–asparagine 22, glycine 105–glycine 107, glutamate 136, arginine 140, and aspartate 184. Low complexity predominate over residues alanine 329 to proline 341. The interval alanine 329 to glutamine 442 is disordered. Basic and acidic residues-rich tracts occupy residues proline 349–asparagine 362 and asparagine 390–arginine 431.

The protein belongs to the FtsZ family. Homodimer. Polymerizes to form a dynamic ring structure in a strictly GTP-dependent manner. Interacts directly with several other division proteins.

It localises to the cytoplasm. Essential cell division protein that forms a contractile ring structure (Z ring) at the future cell division site. The regulation of the ring assembly controls the timing and the location of cell division. One of the functions of the FtsZ ring is to recruit other cell division proteins to the septum to produce a new cell wall between the dividing cells. Binds GTP and shows GTPase activity. The chain is Cell division protein FtsZ from Corynebacterium glutamicum (strain ATCC 13032 / DSM 20300 / JCM 1318 / BCRC 11384 / CCUG 27702 / LMG 3730 / NBRC 12168 / NCIMB 10025 / NRRL B-2784 / 534).